The sequence spans 476 residues: Calcium uptake protein 1, mitochondrial (476 aa).

A mitochondrion-targeting transit peptide spans Met1–Leu33. Residues Ser68–Phe106 are disordered. The polybasic region stretch occupies residues Lys99–Lys110. Ser122 bears the Phosphoserine mark. A k/R-ring region spans residues Lys126–Arg129. The region spanning Thr218–Gln253 is the EF-hand 1 domain. Asp231, Asn233, Asp235, Glu237, and Glu242 together coordinate Ca(2+). A k/R-ring region spans residues Arg259–Arg263. One can recognise an EF-hand 2 domain in the interval Leu408–Arg443. Residues Asp421, Asp423, Asn425, Glu427, and Glu432 each contribute to the Ca(2+) site. Residue Arg455 is modified to Asymmetric dimethylarginine. Positions Arg455 to Gln465 are C-helix region.

It belongs to the MICU1 family. MICU1 subfamily. Heterodimer; disulfide-linked; heterodimerizes with MICU2 or MICU3. Homodimer; disulfide-linked. Component of the uniplex complex, composed of MCU, EMRE/SMDT1, MICU1 and MICU2 (or MICU3) in a 4:4:1:1 stoichiometry. The composition of calcium sensors within the uniplex complex can differ depending on tissues: a MICU1 homodimer can be present instead of the MICU1-MICU2 heterodimer in skeletal-muscle and kidney. MICU1 is recruited to the uniplex complex by EMRE/SMDT1, and it associates with MCU at low calcium levels, occluding the pore of the MCU channel. Associates with the MICOS complex. Interacts with SLC25A23. Interacts with CHCHD4/MIA40; which introduces the interchain disulfide bond with MICU2. Interacts (when methylated) with UCP2; leading to decrease the calcium sensitivity of MICU1. Post-translationally, phosphorylation at Ser-122 by AKT1 impairs its maturation and stability. Asymmetric dimethylation at Arg-455 by PRMT1 decreases the calcium sensitivity of MICU1 by promoting interaction with UCP2. In terms of processing, degraded by YME1L1 when not complexed as homodimer or heterodimer. Not degraded when complexed as homodimer or heterodimer; the presence of the interchain disulfide bond protecting MICU1 from degradation by YME1L1. Expressed in epithelial cell lines. Strongly expressed in epidermal keratinocytes and dermal endothelial cells.

Its subcellular location is the mitochondrion intermembrane space. It is found in the mitochondrion inner membrane. With respect to regulation, activated by spermine, kaempferol and SB202190, which bind MICU1 and prevent MCU pore occlusion in absence of calcium. Functionally, calcium sensor of the mitochondrial calcium uniporter (MCU) channel, which senses calcium level via its EF-hand domains. MICU1 and MICU2 (or MICU3) form a disulfide-linked heterodimer that stimulates and inhibits MCU activity, depending on the concentration of calcium. At low calcium levels, MICU1 occludes the pore of the MCU channel, preventing mitochondrial calcium uptake. At higher calcium levels, calcium-binding to MICU1 and MICU2 (or MICU3) induces a conformational change that weakens MCU-MICU1 interactions and moves the MICU1-MICU2 heterodimer away from the pore, allowing calcium permeation through the MCU channel. Also required to protect against manganese toxicity by preventing manganese uptake by MCU: mechanistically, manganese-binding to its EF-hand domains does not induce any conformational change, maintaining MCU pore occlusion. Also acts as a barrier for inhibitors of the MCU channel, such as ruthenium red or its derivative Ru360. Acts as a regulator of mitochondrial cristae structure independently of its ability to regulate the mitochondrial calcium uniporter channel. Regulates glucose-dependent insulin secretion in pancreatic beta-cells by regulating mitochondrial calcium uptake. Induces T-helper 1-mediated autoreactivity, which is accompanied by the release of IFNG. Its function is as follows. Isoform that regulates mitochondrial calcium uniporter (MCU) in the skeletal muscle. Compared to other isoforms, this isoform has higher affinity for calcium, promoting mitochondrial calcium uptake at lower calcium concentrations. This allows a rapid response of mitochondrial metabolism and ensures sustained ATP production needed for resistance and strenuous exercise. The protein is Calcium uptake protein 1, mitochondrial of Homo sapiens (Human).